The following is a 388-amino-acid chain: Na(+)/H(+) antiporter NhaA (388 aa).

Over 1–11 (MKHLHRFFSSD) the chain is Cytoplasmic. The chain crosses the membrane as a helical span at residues 12–31 (ASGGIILIIAAILAMMMANS). Topologically, residues 32-58 (GATSGWYHDFLETPVQLRVGSLEINKN) are periplasmic. A helical transmembrane segment spans residues 59–80 (MLLWINDALMAVFFLLVGLEVK). At 81-96 (RELMQGSLASLRQAAF) the chain is on the cytoplasmic side. Residues 97–116 (PVIAAIGGMIVPALLYLAFN) traverse the membrane as a helical segment. Topologically, residues 117 to 122 (YADPIT) are periplasmic. A helical membrane pass occupies residues 123–130 (REGWAIPA). Residues 131 to 154 (ATDIAFALGVLALLGSRVPLALKI) are Cytoplasmic-facing. A helical transmembrane segment spans residues 155 to 176 (FLMALAIIDDLGAIIIIALFYT). The Periplasmic portion of the chain corresponds to 177–180 (NDLS). Residues 181-200 (MASLGVAAVAIAVLAVLNLC) form a helical membrane-spanning segment. Topologically, residues 201–204 (GVRR) are cytoplasmic. A helical membrane pass occupies residues 205–222 (TGVYILVGVVLWTAVLKS). Residue Gly223 is a topological domain, periplasmic. A helical membrane pass occupies residues 224-236 (VHATLAGVIVGFF). Residues 237–253 (IPLKEKHGRSPAKRLEH) are Cytoplasmic-facing. A helical transmembrane segment spans residues 254 to 272 (VLHPWVAYLILPLFAFANA). At 273–286 (GVSLQGVTLDGLTS) the chain is on the periplasmic side. A helical transmembrane segment spans residues 287-310 (ILPLGIIAGLLIGKPLGISLFCWL). Over 311-339 (ALRLKLAHLPEGTTYQQIMAVGILCGIGF) the chain is Cytoplasmic. The helical transmembrane segment at 340-350 (TMSIFIASLAF) threads the bilayer. The Periplasmic portion of the chain corresponds to 351–357 (GSVDPEL). The helical transmembrane segment at 358–380 (INWAKLGILVGSISSAVIGYSWL) threads the bilayer. Residues 381 to 388 (RVRLRPSV) lie on the Cytoplasmic side of the membrane.

The protein belongs to the NhaA Na(+)/H(+) (TC 2.A.33) antiporter family.

The protein localises to the cell inner membrane. The enzyme catalyses Na(+)(in) + 2 H(+)(out) = Na(+)(out) + 2 H(+)(in). Its function is as follows. Na(+)/H(+) antiporter that extrudes sodium in exchange for external protons. This chain is Na(+)/H(+) antiporter NhaA, found in Shigella boydii serotype 4 (strain Sb227).